The sequence spans 455 residues: Probable glycine dehydrogenase (decarboxylating) subunit 1 (455 aa).

The protein belongs to the GcvP family. N-terminal subunit subfamily. The glycine cleavage system is composed of four proteins: P, T, L and H. In this organism, the P 'protein' is a heterodimer of two subunits.

The catalysed reaction is N(6)-[(R)-lipoyl]-L-lysyl-[glycine-cleavage complex H protein] + glycine + H(+) = N(6)-[(R)-S(8)-aminomethyldihydrolipoyl]-L-lysyl-[glycine-cleavage complex H protein] + CO2. The glycine cleavage system catalyzes the degradation of glycine. The P protein binds the alpha-amino group of glycine through its pyridoxal phosphate cofactor; CO(2) is released and the remaining methylamine moiety is then transferred to the lipoamide cofactor of the H protein. The polypeptide is Probable glycine dehydrogenase (decarboxylating) subunit 1 (Saccharolobus islandicus (strain Y.G.57.14 / Yellowstone #1) (Sulfolobus islandicus)).